A 140-amino-acid chain; its full sequence is Ctenidin-1 (140 aa).

The N-terminal stretch at 1 to 19 (MKHLIPLIVMASVVLAVYA) is a signal peptide. Gly-138 carries the post-translational modification Glycine amide.

It belongs to the glycine-rich peptide family. As to expression, expressed in hemocytes (at protein level).

It is found in the secreted. Antimicrobial protein with bacteriostatic activity against the Gram-negative bacterium E.coli, and very weak activity against the Gram-positive bacterium S.aureus. Lacks activity against the yeast C.albicans. The polypeptide is Ctenidin-1 (Cupiennius salei (American wandering spider)).